A 426-amino-acid chain; its full sequence is Serine--tRNA ligase (426 aa).

An L-serine-binding site is contributed by 230-232 (TAE). ATP is bound at residue 261 to 263 (RSE). Residue E284 participates in L-serine binding. 348–351 (EISS) lines the ATP pocket. S384 serves as a coordination point for L-serine.

It belongs to the class-II aminoacyl-tRNA synthetase family. Type-1 seryl-tRNA synthetase subfamily. As to quaternary structure, homodimer. The tRNA molecule binds across the dimer.

It localises to the cytoplasm. It catalyses the reaction tRNA(Ser) + L-serine + ATP = L-seryl-tRNA(Ser) + AMP + diphosphate + H(+). It carries out the reaction tRNA(Sec) + L-serine + ATP = L-seryl-tRNA(Sec) + AMP + diphosphate + H(+). It participates in aminoacyl-tRNA biosynthesis; selenocysteinyl-tRNA(Sec) biosynthesis; L-seryl-tRNA(Sec) from L-serine and tRNA(Sec): step 1/1. Functionally, catalyzes the attachment of serine to tRNA(Ser). Is also able to aminoacylate tRNA(Sec) with serine, to form the misacylated tRNA L-seryl-tRNA(Sec), which will be further converted into selenocysteinyl-tRNA(Sec). This is Serine--tRNA ligase from Streptococcus mutans serotype c (strain ATCC 700610 / UA159).